The sequence spans 1857 residues: MRPEVEQELAHTLLVELLAYQFASPVRWIETQDVILAEQRTERIVEIGPADTLGGMARRTLASKYEAYDAATSVQRQILCYNKDAKEIYYDVDPVEEEPEATEPAPSATPAAPAAAPAAGAPPPPPSAGPAASVEDIPVTAVDILRTLVAQKLKKSLADVPLSKAIKDLVGGKSTLQNEILGDLGKEFGSTPEKPEDVPLDELGASMQATFNGQLGKQSSSLIARMVSSKMPGGFNITSVRKYLETRWGLGSGRQDGVLLLALTMEPAARLGSEVDAKAYLDDVTNKYAASAGVNLSAPVAGGDSGGAGGGMVMDPAAIDALTKDQRALFKQQLEIIARYLKMDLRGGEKAHVISQETQKALQAQLDLWQAEHGDFYASGIEPSFDQLKARVYDSSWNWARQDALSMYYDIIFGRLQVVDREIVSQCIRIMNRSNPLLLDFMQYHIDNCPTERGETYQLAKELGQQLIENCREVLEVAPVYKDVAVPTGPQTTIDARGNISYKETPRTSARKLEHYVKHMAEGGPISEYSNRTKVQNDLKSVYKLIRKQHRLSKSSQLQFDALYKDVVHALGMNESQIIPQENGHSKKGGRSAAKRNTPTRPGKVETIPFLHLKKKTEHGWDYNKKLTGIYLNVTESAAKDGLSFQGKNVLMTGAGAGSIGAEVLQGLISGGAQVIVTTSRFSREVTEYYQAMYARYGARGSQLVVVPFNQGSKQDVEALVEYIYDTKKGLGWDLDFVVPFAAIPENGREIDSIDSKSELAHRIMLTNLLRLLGSVKTQKQAHGFETRPAQVILPLSPNHGTFGNDGLYSESKLALETLFNRWYSENWGHYLTICGAVIGWTRGTGLMSGNNMVAEGVEKLGVRTFSQQEMAFNLLGLMSPAIVNLCQLDPVFADLNGGLQFIPDLKGLMTKLRTDIMETSDVRQAVMKETAIEHNIVNGEDSGVLYKKVIAEPRANIKFEFPNLPDWEKEVKPLNENLKGMVNLDKVVVVTGFSEVGPWGNSRTRWEMESKGKFSLEGCVEMAWIMGLIKHHNGPLKGQAYSGWVDAKTGEPVDDKDVKPKYEKHILEHTGIRLIEPELFKGYDPKKKQLLQEIVIQEDLEPFEASKETAEEFKREHGDKVEIFEIPESGEYTVRLCKGATMLIPKALQFDRLVAGQVPTGWDASRYGIPDDIISQVDPVTLFVLVCTAEAMLSAGVTDPYEFYKYVHLSEVGNCIGSGIGGTHRLRGMYKDRFLDKPLQKDILQESFINTMSAWVNMLLLSSTGPIKTPVGCCATAVESVDIGYETIVEGKARVCFVGGFDDFQEEGSYEFANMKATSNAEDEFAHGRTPQEMSRPTTTTRAGFMESQGCGMQLIMTAQLALDMGVPIHGIIALTTTATDKIGRSVRSVPAPGQGVLTTARENPGKFPSPLLDIKYRRRQLDLRKKQINEWQEAELLYLQEEAEAMKAQSDETFNEAEYMQERAQHIEREAIRQEKDAQYSLGNNFWKQDSRIAPLRGAMATWGLTVDDIDVASFHGTSTVANDKNESDVICQQMKHLGRSKGNAVMGIFQKYLTGHPKGAAGAWMFNGCLQVLDSGLVPGNRNADNVDKVMEKFDYIVYPSRSIQTDGVKAFSVTSFGFGQKGAQVIGIHPKYLYATLDQAQYEAYKTKVEARQKKAYRYFHNGLINNSIFVAKSKAPYEDEQQSKVFLNPDYRVSVDKKTSELKFSTTAPEAKQSESTRQTLESLAKANATENSKIGVDVEHIDSVNIENETFVERNFTQSEQDYCRKAASPQSSFAGRWSAKEAVFKSLGVSSKGAGAALKDIEIGVDANGAPVVNLHGAAAAAAKQAGVKQVSVSISHSDSQAVAVAVSQF.

Residues 96-132 (EEEPEATEPAPSATPAAPAAAPAAGAPPPPPSAGPAA) form a disordered region. Over residues 102–119 (TEPAPSATPAAPAAAPAA) the composition is skewed to low complexity. One can recognise a Carrier domain in the interval 139-214 (VTAVDILRTL…ASMQATFNGQ (76 aa)). At Ser174 the chain carries O-(pantetheine 4'-phosphoryl)serine. The tract at residues 577–604 (QIIPQENGHSKKGGRSAAKRNTPTRPGK) is disordered. Residues 648–845 (KNVLMTGAGA…GAVIGWTRGT (198 aa)) are beta-ketoacyl reductase. Residues 1092–1633 (LQEIVIQEDL…QKGAQVIGIH (542 aa)) enclose the Ketosynthase family 3 (KS3) domain. Residues Cys1275, His1518, and His1559 each act as for beta-ketoacyl synthase activity in the active site. Positions 1743, 1744, and 1745 each coordinate Mg(2+). Residues 1743–1745 (DVE), Tyr1769, Ser1779, 1788–1798 (EAVFKSLGVSS), 1812–1815 (VDAN), and 1842–1844 (ISH) each bind acetyl-CoA. The Mg(2+) site is built by Ser1843 and His1844.

It belongs to the thiolase-like superfamily. Fungal fatty acid synthetase subunit alpha family. In terms of assembly, [Alpha(6)beta(6)] hexamers of two multifunctional subunits (alpha and beta).

It catalyses the reaction acetyl-CoA + n malonyl-CoA + 2n NADPH + 4n H(+) = a long-chain-acyl-CoA + n CoA + n CO2 + 2n NADP(+).. The catalysed reaction is a fatty acyl-[ACP] + malonyl-[ACP] + H(+) = a 3-oxoacyl-[ACP] + holo-[ACP] + CO2. The enzyme catalyses a (3R)-hydroxyacyl-[ACP] + NADP(+) = a 3-oxoacyl-[ACP] + NADPH + H(+). Its function is as follows. Fatty acid synthetase catalyzes the formation of long-chain fatty acids from acetyl-CoA, malonyl-CoA and NADPH. The alpha subunit contains domains for: acyl carrier protein, 3-oxoacyl-[acyl-carrier-protein] reductase, and 3-oxoacyl-[acyl-carrier-protein] synthase. The sequence is that of Fatty acid synthase subunit alpha (FAS2) from Penicillium patulum (Penicillium griseofulvum).